A 278-amino-acid chain; its full sequence is Large ribosomal subunit protein uL2 (278 aa).

Disordered stretches follow at residues M1–D20, T25–G57, and V224–R278. Composition is skewed to basic residues over residues A45 to G57 and V269 to R278.

This sequence belongs to the universal ribosomal protein uL2 family. In terms of assembly, part of the 50S ribosomal subunit. Forms a bridge to the 30S subunit in the 70S ribosome.

Functionally, one of the primary rRNA binding proteins. Required for association of the 30S and 50S subunits to form the 70S ribosome, for tRNA binding and peptide bond formation. It has been suggested to have peptidyltransferase activity; this is somewhat controversial. Makes several contacts with the 16S rRNA in the 70S ribosome. The sequence is that of Large ribosomal subunit protein uL2 from Nocardia farcinica (strain IFM 10152).